We begin with the raw amino-acid sequence, 152 residues long: Large ribosomal subunit protein bL9 (152 aa).

It belongs to the bacterial ribosomal protein bL9 family.

Its function is as follows. Binds to the 23S rRNA. This is Large ribosomal subunit protein bL9 from Synechocystis sp. (strain ATCC 27184 / PCC 6803 / Kazusa).